Here is a 303-residue protein sequence, read N- to C-terminus: Glutamyl-Q tRNA(Asp) synthetase (303 aa).

L-glutamate contacts are provided by residues 16–20 (RFAPS) and glutamate 52. The short motif at 19–29 (PSPSGPLHFGS) is the 'HIGH' region element. Zn(2+) contacts are provided by cysteine 108, cysteine 110, tyrosine 122, and cysteine 126. 2 residues coordinate L-glutamate: tyrosine 177 and arginine 195. Positions 233 to 237 (KLSKQ) match the 'KMSKS' region motif. Lysine 236 contacts ATP.

It belongs to the class-I aminoacyl-tRNA synthetase family. GluQ subfamily. Requires Zn(2+) as cofactor.

Its function is as follows. Catalyzes the tRNA-independent activation of glutamate in presence of ATP and the subsequent transfer of glutamate onto a tRNA(Asp). Glutamate is transferred on the 2-amino-5-(4,5-dihydroxy-2-cyclopenten-1-yl) moiety of the queuosine in the wobble position of the QUC anticodon. In Vibrio vulnificus (strain CMCP6), this protein is Glutamyl-Q tRNA(Asp) synthetase.